Here is a 575-residue protein sequence, read N- to C-terminus: Cytoskeleton-associated protein 4 (575 aa).

The interval 1 to 73 (MPSAKQRGSK…RGRSSAATAN (73 aa)) is disordered. Topologically, residues 1-85 (MPSAKQRGSK…SASCSRRLGR (85 aa)) are cytoplasmic. 3 positions are modified to phosphoserine: S3, S17, and S19. N6-acetyllysine is present on K21. Pro residues predominate over residues 37 to 53 (PAAPQQPQPPAPHPPQH). The S-palmitoyl cysteine; by ZDHHC2 moiety is linked to residue C79. The helical transmembrane segment at 86–108 (VLNFLFYLSLVAAAAFSGWYVHH) threads the bilayer. The Extracellular portion of the chain corresponds to 109 to 575 (VLEEVQQVRR…LKVEKIHEKI (467 aa)). Residues 125–193 (RQRDELGQGL…QKLQNEILKD (69 aa)) adopt a coiled-coil conformation. S211, S292, and S367 each carry phosphoserine. Coiled coils occupy residues 236–438 (DVQK…VGNL) and 507–575 (SSLD…HEKI).

As to quaternary structure, interacts with REEP5. Reversibly palmitoylated. Palmitoylation at Cys-79 by DHHC2 is required for its trafficking from the ER to the plasma membrane and for its perinuclear localization. Post-translationally, increased phosphorylation during mitosis prevents binding to microtubules. As to expression, expressed in cardiomyocytes (at protein level).

The protein resides in the endoplasmic reticulum membrane. Its subcellular location is the cell membrane. It localises to the cytoplasm. It is found in the cytoskeleton. The protein localises to the perinuclear region. High-affinity epithelial cell surface receptor for APF. Its function is as follows. Mediates the anchoring of the endoplasmic reticulum to microtubules. This chain is Cytoskeleton-associated protein 4 (Ckap4), found in Mus musculus (Mouse).